The sequence spans 222 residues: PKHD-type hydroxylase P9301_13621 (222 aa).

In terms of domain architecture, Fe2OG dioxygenase spans 81 to 175; it reads KIHGIMFTKS…RLVCVGWIES (95 aa). Fe cation-binding residues include H99, D101, and H156. Residue R166 coordinates 2-oxoglutarate.

It depends on Fe(2+) as a cofactor. L-ascorbate serves as cofactor.

This Prochlorococcus marinus (strain MIT 9301) protein is PKHD-type hydroxylase P9301_13621.